Consider the following 198-residue polypeptide: Holliday junction branch migration complex subunit RuvA (198 aa).

Residues 1–61 form a domain I region; the sequence is MTLYKIGEIV…DYIQQTYGFK (61 aa). Residues 62 to 139 are domain II; the sequence is TFKERLLFTD…KIIQNKEVKK (78 aa). A flexible linker region spans residues 140 to 144; it reads FDDIT. Positions 144 to 198 are domain III; sequence TNIKELKQTLNKLGFKASDIDYAVNNISSTKELDLMVEESINLITTQMHANNQTT.

It belongs to the RuvA family. As to quaternary structure, homotetramer. Forms an RuvA(8)-RuvB(12)-Holliday junction (HJ) complex. HJ DNA is sandwiched between 2 RuvA tetramers; dsDNA enters through RuvA and exits via RuvB. An RuvB hexamer assembles on each DNA strand where it exits the tetramer. Each RuvB hexamer is contacted by two RuvA subunits (via domain III) on 2 adjacent RuvB subunits; this complex drives branch migration. In the full resolvosome a probable DNA-RuvA(4)-RuvB(12)-RuvC(2) complex forms which resolves the HJ.

It is found in the cytoplasm. Its function is as follows. The RuvA-RuvB-RuvC complex processes Holliday junction (HJ) DNA during genetic recombination and DNA repair, while the RuvA-RuvB complex plays an important role in the rescue of blocked DNA replication forks via replication fork reversal (RFR). RuvA specifically binds to HJ cruciform DNA, conferring on it an open structure. The RuvB hexamer acts as an ATP-dependent pump, pulling dsDNA into and through the RuvAB complex. HJ branch migration allows RuvC to scan DNA until it finds its consensus sequence, where it cleaves and resolves the cruciform DNA. This Mycoplasmopsis synoviae (strain 53) (Mycoplasma synoviae) protein is Holliday junction branch migration complex subunit RuvA.